Reading from the N-terminus, the 269-residue chain is Indole-3-glycerol phosphate synthase (269 aa).

Belongs to the TrpC family.

It carries out the reaction 1-(2-carboxyphenylamino)-1-deoxy-D-ribulose 5-phosphate + H(+) = (1S,2R)-1-C-(indol-3-yl)glycerol 3-phosphate + CO2 + H2O. Its pathway is amino-acid biosynthesis; L-tryptophan biosynthesis; L-tryptophan from chorismate: step 4/5. The polypeptide is Indole-3-glycerol phosphate synthase (Rhodococcus opacus (strain B4)).